We begin with the raw amino-acid sequence, 403 residues long: Phosphopentomutase (403 aa).

Positions 13, 298, 303, 339, 340, and 351 each coordinate Mn(2+).

It belongs to the phosphopentomutase family. Mn(2+) is required as a cofactor.

It is found in the cytoplasm. It catalyses the reaction 2-deoxy-alpha-D-ribose 1-phosphate = 2-deoxy-D-ribose 5-phosphate. The catalysed reaction is alpha-D-ribose 1-phosphate = D-ribose 5-phosphate. It participates in carbohydrate degradation; 2-deoxy-D-ribose 1-phosphate degradation; D-glyceraldehyde 3-phosphate and acetaldehyde from 2-deoxy-alpha-D-ribose 1-phosphate: step 1/2. Functionally, isomerase that catalyzes the conversion of deoxy-ribose 1-phosphate (dRib-1-P) and ribose 1-phosphate (Rib-1-P) to deoxy-ribose 5-phosphate (dRib-5-P) and ribose 5-phosphate (Rib-5-P), respectively. This Streptococcus thermophilus (strain ATCC BAA-250 / LMG 18311) protein is Phosphopentomutase.